Consider the following 265-residue polypeptide: Undecaprenyl-diphosphatase (265 aa).

7 helical membrane-spanning segments follow: residues 41 to 61 (IAYT…LIYF), 75 to 95 (LKFL…LYVI), 104 to 124 (YNPS…GIYI), 137 to 157 (LSTK…LPGV), 180 to 200 (YSYL…LLFT), 215 to 235 (GIAL…GFLL), and 244 to 264 (YLID…GLII).

This sequence belongs to the UppP family.

It is found in the cell membrane. The catalysed reaction is di-trans,octa-cis-undecaprenyl diphosphate + H2O = di-trans,octa-cis-undecaprenyl phosphate + phosphate + H(+). In terms of biological role, catalyzes the dephosphorylation of undecaprenyl diphosphate (UPP). This Saccharolobus islandicus (strain Y.G.57.14 / Yellowstone #1) (Sulfolobus islandicus) protein is Undecaprenyl-diphosphatase.